The chain runs to 139 residues: 3-hydroxyacyl-[acyl-carrier-protein] dehydratase FabZ (139 aa).

Residue H46 is part of the active site.

This sequence belongs to the thioester dehydratase family. FabZ subfamily.

Its subcellular location is the cytoplasm. It carries out the reaction a (3R)-hydroxyacyl-[ACP] = a (2E)-enoyl-[ACP] + H2O. Involved in unsaturated fatty acids biosynthesis. Catalyzes the dehydration of short chain beta-hydroxyacyl-ACPs and long chain saturated and unsaturated beta-hydroxyacyl-ACPs. The protein is 3-hydroxyacyl-[acyl-carrier-protein] dehydratase FabZ of Petrotoga mobilis (strain DSM 10674 / SJ95).